Consider the following 381-residue polypeptide: MRFIKRPLISIVNDHLIDYPTPINIHYAWNFGFLSSICLIVQILTGIFLAMHYTPHVDLAFASVEHIMRDVNYGWLLRYIHTNGASMFFIVVYIHIFRGLYFGSYIKPRHWVWVIGVLILLLMILTAFIGYVLPWGQMSLWGATVITNLVSAVPFIGDSIVTWLWGGFSVDNATLNRFFSLHYLMPFVIAAVSLVHLAILHQDGSGNPLGIDSNVDKVSMFPYFIVKDFLGMVIFIIFFSIFVYFSPNVLGHPDNYIEANPMVTPAHIVPEWYFLPFYAILRSIPHKLGGVTAMISAIAILAFLPWIHSTEIRSSRFRPLYRLFYWVMISCCLILGWIGGMPVENPYVIIGQIASIYYFIYFIILLPVLGRIEKFLLEFKI.

4 consecutive transmembrane segments (helical) span residues 31–51 (FGFLSSICLIVQILTGIFLAM), 75–97 (WLLRYIHTNGASMFFIVVYIHIF), 112–132 (VWVIGVLILLLMILTAFIGYV), and 178–198 (FFSLHYLMPFVIAAVSLVHLA). Heme b contacts are provided by His-81 and His-95. Positions 182 and 196 each coordinate heme b. His-201 is an a ubiquinone binding site. 4 helical membrane passes run 224-244 (FIVKDFLGMVIFIIFFSIFVY), 288-308 (LGGVTAMISAIAILAFLPWIH), 320-340 (LYRLFYWVMISCCLILGWIGG), and 347-367 (YVIIGQIASIYYFIYFIILLP).

This sequence belongs to the cytochrome b family. In terms of assembly, the main subunits of complex b-c1 are: cytochrome b, cytochrome c1 and the Rieske protein. Requires heme b as cofactor.

The protein localises to the mitochondrion inner membrane. In terms of biological role, component of the ubiquinol-cytochrome c reductase complex (complex III or cytochrome b-c1 complex) that is part of the mitochondrial respiratory chain. The b-c1 complex mediates electron transfer from ubiquinol to cytochrome c. Contributes to the generation of a proton gradient across the mitochondrial membrane that is then used for ATP synthesis. The polypeptide is Cytochrome b (MT-CYB) (Chondrus crispus (Carrageen Irish moss)).